Reading from the N-terminus, the 429-residue chain is Uracil permease (429 aa).

The Cytoplasmic portion of the chain corresponds to 1–13 (MTRRAIGVSERPP). The helical transmembrane segment at 14 to 37 (LLQTIPLSLQHLFAMFGATVLVPV) threads the bilayer. At 38 to 41 (LFHI) the chain is on the periplasmic side. Residues 42–61 (NPATVLLFNGIGTLLYLFIC) form a helical membrane-spanning segment. At 62–64 (KGK) the chain is on the cytoplasmic side. Residues 65–81 (IPAYLGSSFAFISPVLL) form a discontinuously helical membrane-spanning segment. Uracil is bound at residue Phe73. Residues 82 to 89 (LLPLGYEV) are Periplasmic-facing. The helical transmembrane segment at 90–110 (ALGGFIMCGVLFCLVSFIVKK) threads the bilayer. The Cytoplasmic portion of the chain corresponds to 111-122 (AGTGWLDVLFPP). Residues 123 to 144 (AAMGAIVAVIGLELAGVAAGMA) form a helical membrane-spanning segment. Residues 145 to 155 (GLLPAEGQTPD) lie on the Periplasmic side of the membrane. Residues 156-171 (SKTIIISITTLAVTVL) traverse the membrane as a helical segment. The Cytoplasmic portion of the chain corresponds to 172–178 (GSVLFRG). The chain crosses the membrane as a helical span at residues 179-199 (FLAIIPILIGVLVGYALSFAM). The Periplasmic segment spans residues 200–224 (GIVDTTPIINAHWFALPTLYTPRFE). The chain crosses the membrane as a helical span at residues 225 to 248 (WFAILTILPAALVVIAEHVGHLVV). Glu241 is a binding site for uracil. Over 249 to 261 (TANIVKKDLLRDP) the chain is Cytoplasmic. A helical transmembrane segment spans residues 262–281 (GLHRSMFANGLSTVISGFFG). A discontinuously helical membrane pass occupies residues 282–298 (STPNTTYGENIGVMAIT). Gly289 and Glu290 together coordinate uracil. The Cytoplasmic portion of the chain corresponds to 299–301 (RVY). Residues 302-319 (STWVIGGAAIFAILLSCV) form a helical membrane-spanning segment. The Periplasmic segment spans residues 320–332 (GKLAAAIQMIPLP). The chain crosses the membrane as a helical span at residues 333–354 (VMGGVSLLLYGVIGASGIRVLI). Topologically, residues 355 to 365 (ESKVDYNKAQN) are cytoplasmic. The segment at residues 366 to 401 (LILTSVILIIGVSGAKVNIGAAELKGMALATIVGIG) is an intramembrane region (discontinuously helical). The Cytoplasmic segment spans residues 402-429 (LSLIFKLISVLRPEEVVLDAEDADITDK).

This sequence belongs to the nucleobase:cation symporter-2 (NCS2) (TC 2.A.40) family.

It localises to the cell inner membrane. It catalyses the reaction uracil(in) + H(+)(in) = uracil(out) + H(+)(out). Transport of uracil in the cell. This chain is Uracil permease (uraA), found in Escherichia coli O157:H7.